The chain runs to 262 residues: 2-keto-4-pentenoate hydratase (262 aa).

It belongs to the hydratase/decarboxylase family. MhpD subfamily. It depends on a divalent metal cation as a cofactor.

It carries out the reaction (S)-4-hydroxy-2-oxopentanoate = (2Z)-2-hydroxypenta-2,4-dienoate + H2O. It functions in the pathway aromatic compound metabolism; 3-phenylpropanoate degradation. In terms of biological role, catalyzes the conversion of 2-hydroxypentadienoic acid (enolic form of 2-oxopent-4-enoate) to 4-hydroxy-2-ketopentanoic acid. This Paraburkholderia phymatum (strain DSM 17167 / CIP 108236 / LMG 21445 / STM815) (Burkholderia phymatum) protein is 2-keto-4-pentenoate hydratase.